We begin with the raw amino-acid sequence, 173 residues long: Protein PLASTID REDOX INSENSITIVE 2, chloroplastic (173 aa).

The N-terminal 55 residues, 1–55 (MATRAWVAAAVALNPQLLPLRSCSPTKSVSPAQRSASMGLRLRSGRPCLGKFVCR), are a transit peptide targeting the chloroplast.

It localises to the plastid. The protein localises to the chloroplast stroma. It is found in the chloroplast nucleoid. Its function is as follows. Required for the activity of the plastid-encoded RNA polymerase (PEP) and full expression of genes transcribed by PEP. This Zea mays (Maize) protein is Protein PLASTID REDOX INSENSITIVE 2, chloroplastic.